The following is a 440-amino-acid chain: 2-methylisoborneol synthase (440 aa).

2 disordered regions span residues 1–33 (MPDS…IPSA) and 46–74 (LHPP…TVTG). Pro residues-rich tracts occupy residues 9–29 (TPPP…PAPV) and 50–63 (VTVP…PPAP). Positions 197, 198, 202, 345, 349, and 353 each coordinate Mg(2+).

It belongs to the terpene synthase family. 2-methylisoborneol synthase subfamily. Mg(2+) serves as cofactor.

It catalyses the reaction (E)-2-methylgeranyl diphosphate + H2O = 2-methylisoborneol + diphosphate. Catalyzes the cyclization of 2-methylgeranyl diphosphate (2-MeGPP) to 2-methylisoborneol (2-MIB), which likely involves the intermediacy of 2-methyllinalyl diphosphate. Is also able to catalyze the cyclization of geranyl diphosphate (GPP), albeit with much lower efficiency, leading to the formation of a complex mixture of cyclic monoterpenes, consisting of alpha-pinene (6%), beta-pinene (23%), limonene (32%), gamma-terpinene (29%), and delta-terpinene (10%). This Streptomyces coelicolor (strain ATCC BAA-471 / A3(2) / M145) protein is 2-methylisoborneol synthase.